Consider the following 537-residue polypeptide: Putative cysteine ligase BshC (537 aa).

Positions Ala417–Asn457 form a coiled coil.

The protein belongs to the BshC family.

Involved in bacillithiol (BSH) biosynthesis. May catalyze the last step of the pathway, the addition of cysteine to glucosamine malate (GlcN-Mal) to generate BSH. The chain is Putative cysteine ligase BshC from Staphylococcus carnosus (strain TM300).